The following is a 162-amino-acid chain: SsrA-binding protein (162 aa).

Positions 140-162 (EDRRHDIKERETKREMDRAMRRR) are disordered.

The protein belongs to the SmpB family.

The protein localises to the cytoplasm. Its function is as follows. Required for rescue of stalled ribosomes mediated by trans-translation. Binds to transfer-messenger RNA (tmRNA), required for stable association of tmRNA with ribosomes. tmRNA and SmpB together mimic tRNA shape, replacing the anticodon stem-loop with SmpB. tmRNA is encoded by the ssrA gene; the 2 termini fold to resemble tRNA(Ala) and it encodes a 'tag peptide', a short internal open reading frame. During trans-translation Ala-aminoacylated tmRNA acts like a tRNA, entering the A-site of stalled ribosomes, displacing the stalled mRNA. The ribosome then switches to translate the ORF on the tmRNA; the nascent peptide is terminated with the 'tag peptide' encoded by the tmRNA and targeted for degradation. The ribosome is freed to recommence translation, which seems to be the essential function of trans-translation. The protein is SsrA-binding protein of Myxococcus xanthus (strain DK1622).